The primary structure comprises 306 residues: uncharacterized protein (306 aa).

A run of 9 helical transmembrane segments spans residues 13–33 (VLLS…FAFI), 53–73 (PLPM…FAWG), 86–106 (ITGL…IWAA), 112–132 (VGLT…IVPL), 147–167 (WGMM…GMLF), 177–197 (AFVS…VIAI), 214–234 (AGIA…AWLI), 246–268 (VSLI…VTFF), and 272–294 (VAVP…GYML).

The protein resides in the cell membrane. This is an uncharacterized protein from Bacillus subtilis (strain 168).